Reading from the N-terminus, the 108-residue chain is Nucleoid-associated protein PSHAa1202 (108 aa).

Disordered stretches follow at residues 1–20 and 87–108; these read MFKGGMGNMMKQAQQMQDRM and TQERMGKVTGGMQLPPGMKMPF.

The protein belongs to the YbaB/EbfC family. In terms of assembly, homodimer.

Its subcellular location is the cytoplasm. It localises to the nucleoid. Binds to DNA and alters its conformation. May be involved in regulation of gene expression, nucleoid organization and DNA protection. The chain is Nucleoid-associated protein PSHAa1202 from Pseudoalteromonas translucida (strain TAC 125).